A 348-amino-acid polypeptide reads, in one-letter code: L-threonine 3-dehydrogenase (348 aa).

Position 42 (C42) interacts with Zn(2+). Residues T44 and H47 each act as charge relay system in the active site. Zn(2+)-binding residues include H67, E68, C97, C100, C103, and C111. NAD(+) is bound by residues L179, E199, R204, 266 to 268 (LGL), and 291 to 292 (IT).

It belongs to the zinc-containing alcohol dehydrogenase family. As to quaternary structure, homotetramer. The cofactor is Zn(2+).

It localises to the cytoplasm. It carries out the reaction L-threonine + NAD(+) = (2S)-2-amino-3-oxobutanoate + NADH + H(+). It participates in amino-acid degradation; L-threonine degradation via oxydo-reductase pathway; glycine from L-threonine: step 1/2. Its function is as follows. Catalyzes the NAD(+)-dependent oxidation of L-threonine to 2-amino-3-ketobutyrate. This Pyrococcus abyssi (strain GE5 / Orsay) protein is L-threonine 3-dehydrogenase.